Here is a 118-residue protein sequence, read N- to C-terminus: MKTLPKERRYETFSYLPPLSDAQIARQIQYAIDQGYHPCVEFNETSNAEIRYWTMWKLPLFNCTNAQDVLNEVQQCRSEYPNCFIRVVAFDNIKQCQVMSFIVYKPNQANSGYSGYRY.

The protein belongs to the RuBisCO small chain family. Heterohexadecamer of 8 large and 8 small subunits.

The protein localises to the carboxysome. In terms of biological role, ruBisCO catalyzes two reactions: the carboxylation of D-ribulose 1,5-bisphosphate, the primary event in carbon dioxide fixation, as well as the oxidative fragmentation of the pentose substrate in the photorespiration process. Both reactions occur simultaneously and in competition at the same active site. Although the small subunit is not catalytic it is essential for maximal activity. This is Ribulose bisphosphate carboxylase small subunit from Thermosynechococcus vestitus (strain NIES-2133 / IAM M-273 / BP-1).